The sequence spans 385 residues: cAMP-dependent protein kinase, catalytic subunit-like (385 aa).

Residues 63–317 form the Protein kinase domain; it reads LERIVTIGKG…TQDVKDHKWF (255 aa). ATP is bound by residues 69 to 77 and lysine 92; that span reads IGKGTFGRV. Aspartate 186 functions as the Proton acceptor in the catalytic mechanism. In terms of domain architecture, AGC-kinase C-terminal spans 318 to 385; that stretch reads EKVNWDDTLH…QRERDLFAEW (68 aa).

It belongs to the protein kinase superfamily. Ser/Thr protein kinase family. cAMP subfamily.

It catalyses the reaction L-seryl-[protein] + ATP = O-phospho-L-seryl-[protein] + ADP + H(+). The enzyme catalyses L-threonyl-[protein] + ATP = O-phospho-L-threonyl-[protein] + ADP + H(+). The chain is cAMP-dependent protein kinase, catalytic subunit-like from Caenorhabditis briggsae.